An 80-amino-acid polypeptide reads, in one-letter code: Raniseptin-2 (80 aa).

A signal peptide spans 1 to 22 (MAFLKKSLFLVLFLGIVSLSIC). A propeptide spanning residues 23 to 49 (EEEKRVGEEEEKQEEENEELSEEELRE) is cleaved from the precursor. The segment at 27-46 (RVGEEEEKQEEENEELSEEE) is disordered. Residues 30-44 (EEEEKQEEENEELSE) are compositionally biased toward acidic residues.

The protein belongs to the frog skin active peptide (FSAP) family. Dermaseptin subfamily. As to expression, expressed by the skin glands.

The protein localises to the secreted. Has antibacterial activity. This is Raniseptin-2 from Boana raniceps (Chaco tree frog).